The following is a 305-amino-acid chain: Ornithine carbamoyltransferase (305 aa).

Carbamoyl phosphate is bound by residues 50–53 (STRT), Q77, R101, and 128–131 (HPCQ). Residues N159, D222, and 226 to 227 (SM) each bind L-ornithine. Carbamoyl phosphate contacts are provided by residues 262-263 (CL) and R290.

The protein belongs to the aspartate/ornithine carbamoyltransferase superfamily. OTCase family.

It localises to the cytoplasm. The enzyme catalyses carbamoyl phosphate + L-ornithine = L-citrulline + phosphate + H(+). The protein operates within amino-acid biosynthesis; L-arginine biosynthesis; L-arginine from L-ornithine and carbamoyl phosphate: step 1/3. In terms of biological role, reversibly catalyzes the transfer of the carbamoyl group from carbamoyl phosphate (CP) to the N(epsilon) atom of ornithine (ORN) to produce L-citrulline. This chain is Ornithine carbamoyltransferase, found in Synechococcus elongatus (strain ATCC 33912 / PCC 7942 / FACHB-805) (Anacystis nidulans R2).